We begin with the raw amino-acid sequence, 745 residues long: Ankyrin repeat and protein kinase domain-containing protein 1 (745 aa).

Residues 34 to 301 (EEEWHLVASG…NVAVETDMLL (268 aa)) enclose the Protein kinase domain. Residues 40–48 (VASGGFSKV) and Lys63 contribute to the ATP site. The active-site Proton acceptor is the Asp157. ANK repeat units follow at residues 369-398 (NRVTPLHFLVAGGSLEQVRLLLSHDVDVDC), 402-431 (SGYTPLLIATQDQQPDLCALLLAHGADTNL), 435-464 (DGWAPLHFAAQNGDDHTARLLLDHGALVNA), 468-497 (EGWTPLHLAAQNNFENVARLLVSRQADLSP), 501-530 (EGKTPLHVAAYFGHIGLVKLLSGQGAELDA), 534-563 (NLRTPLHLAVERGKVRAIQHLLKCGALPDA), 567-596 (SGYSPLHIAAARGKDLIFKMLLRYGASLEL), 600-629 (QGWTPLHLATYKGHLEIIHQLAKSHVDLDA), 633-662 (MQWTPLHLAAFQGEEGVMLALLQCGANPNA), 666-695 (SGWTPLHLAVHKGTFLGITHLLEYGADIHA), and 699-728 (VGWTPAHLAALKGNTAILKVLVKAAAQVDV).

It belongs to the protein kinase superfamily. TKL Ser/Thr protein kinase family.

The catalysed reaction is L-seryl-[protein] + ATP = O-phospho-L-seryl-[protein] + ADP + H(+). The enzyme catalyses L-threonyl-[protein] + ATP = O-phospho-L-threonyl-[protein] + ADP + H(+). This chain is Ankyrin repeat and protein kinase domain-containing protein 1 (Ankk1), found in Mus musculus (Mouse).